We begin with the raw amino-acid sequence, 352 residues long: Protein RecA (352 aa).

Residue 67–74 (GPESSGKT) coordinates ATP.

This sequence belongs to the RecA family.

The protein resides in the cytoplasm. Functionally, can catalyze the hydrolysis of ATP in the presence of single-stranded DNA, the ATP-dependent uptake of single-stranded DNA by duplex DNA, and the ATP-dependent hybridization of homologous single-stranded DNAs. It interacts with LexA causing its activation and leading to its autocatalytic cleavage. The protein is Protein RecA of Chlamydia trachomatis serovar D (strain ATCC VR-885 / DSM 19411 / UW-3/Cx).